Reading from the N-terminus, the 170-residue chain is ATP synthase subunit b (170 aa).

The helical transmembrane segment at 22–41 (ILNWAVVVFGLYKFLPGFLG) threads the bilayer. A disordered region spans residues 76–98 (LSSAAEKASQIKADSLKRSESIR). Over residues 89-98 (DSLKRSESIR) the composition is skewed to basic and acidic residues.

It belongs to the ATPase B chain family. In terms of assembly, F-type ATPases have 2 components, F(1) - the catalytic core - and F(0) - the membrane proton channel. F(1) has five subunits: alpha(3), beta(3), gamma(1), delta(1), epsilon(1). F(0) has four main subunits: a(1), b(1), b'(1) and c(10-14). The alpha and beta chains form an alternating ring which encloses part of the gamma chain. F(1) is attached to F(0) by a central stalk formed by the gamma and epsilon chains, while a peripheral stalk is formed by the delta, b and b' chains.

It localises to the cellular thylakoid membrane. Functionally, f(1)F(0) ATP synthase produces ATP from ADP in the presence of a proton or sodium gradient. F-type ATPases consist of two structural domains, F(1) containing the extramembraneous catalytic core and F(0) containing the membrane proton channel, linked together by a central stalk and a peripheral stalk. During catalysis, ATP synthesis in the catalytic domain of F(1) is coupled via a rotary mechanism of the central stalk subunits to proton translocation. In terms of biological role, component of the F(0) channel, it forms part of the peripheral stalk, linking F(1) to F(0). This is ATP synthase subunit b from Prochlorococcus marinus (strain AS9601).